The following is a 445-amino-acid chain: Phosphoglucosamine mutase 1 (445 aa).

Ser102 (phosphoserine intermediate) is an active-site residue. Mg(2+)-binding residues include Ser102, Asp241, Asp243, and Asp245. A Phosphoserine modification is found at Ser102.

The protein belongs to the phosphohexose mutase family. Mg(2+) is required as a cofactor. Post-translationally, activated by phosphorylation.

It carries out the reaction alpha-D-glucosamine 1-phosphate = D-glucosamine 6-phosphate. In terms of biological role, catalyzes the conversion of glucosamine-6-phosphate to glucosamine-1-phosphate. The chain is Phosphoglucosamine mutase 1 from Shewanella baltica (strain OS185).